Consider the following 965-residue polypeptide: Collagen alpha-1(I) chain (965 aa).

A disordered region spans residues 1 to 965; the sequence is GGISVPGPMG…PGPPGPPGPP (965 aa). 11 positions are modified to 4-hydroxyproline: P18, P21, P23, P32, P35, P38, P53, P68, P74, P83, and P89. A compositionally biased stretch (low complexity) spans 26 to 44; the sequence is QGFQGPPGEPGEPGSSGPM. The span at 56–70 shows a compositional bias: basic and acidic residues; it reads NGDDGEAGKPGRPGE. 5-hydroxylysine; alternate is present on K92. Residue K92 is glycosylated (O-linked (Gal...) hydroxylysine; alternate). The residue at position 98 (S98) is a Phosphoserine. Residues 106–122 show a composition bias toward low complexity; it reads DAGPAGPKGEPGSPGEN. 4-hydroxyproline occurs at positions 116, 119, 125, 139, 160, 169, 172, 199, 202, 214, 220, 229, 235, 238, and 253. The span at 139-157 shows a compositional bias: low complexity; that stretch reads PGASGPAGARGNDGATGAA. Positions 159 to 171 are enriched in pro residues; the sequence is PPGPTGPAGPPGF. The span at 205-244 shows a compositional bias: low complexity; that stretch reads AGAAGPAGNPGADGQPGAKGANGAPGIAGAPGFPGARGPS. At K256 the chain carries 5-hydroxylysine. P262, P265, P269, P278, P293, P299, P308, and P314 each carry 4-hydroxyproline. Over residues 303-312 the composition is skewed to gly residues; sequence GERGGPGSRG. At K323 the chain carries 5-hydroxylysine. 24 positions are modified to 4-hydroxyproline: P326, P332, P338, P347, P350, P359, P368, P374, P386, P395, P404, P407, P425, P442, P448, P454, P460, P466, P472, P484, P493, P506, P512, and P521. Positions 341–367 are enriched in low complexity; it reads KGLTGSPGSPGPDGKTGPPGPAGQDGR. Residues 376 to 395 show a composition bias toward low complexity; sequence ARGQAGVMGFPGPKGAAGEP. Residues 454–463 show a composition bias toward low complexity; the sequence is PGEAGKPGEQ. K533 bears the 5-hydroxylysine mark. 3 positions are modified to 4-hydroxyproline: P539, P554, and P560. Positions 566–580 are enriched in low complexity; that stretch reads SGPSGPAGPTGARGA. S569 carries the phosphoserine modification. 4-hydroxyproline occurs at positions 581, 587, 590, 599, 605, 623, 632, and 641. A compositionally biased stretch (low complexity) spans 593–620; that stretch reads AGFAGPPGADGQPGAKGEPGDAGAKGDA. A 5-hydroxylysine modification is found at K644. The segment covering 649-665 has biased composition (low complexity); it reads SAGPPGATGFPGAAGRV. 2 positions are modified to 4-hydroxyproline: P653 and P659. P667 is modified (3-hydroxyproline). Residues P668, P677, P680, P716, P725, P743, P752, P755, P761, P776, P782, P788, P796, and P802 each carry the 4-hydroxyproline modification. Positions 710–725 are enriched in low complexity; sequence SGEKGSPGADGPAGAP. Pro residues predominate over residues 775–785; the sequence is PPGPMGPPGLA. 5-hydroxylysine is present on K811. 4-hydroxyproline occurs at positions 819, 822, and 825. The span at 819–831 shows a compositional bias: pro residues; the sequence is PGAPGAPGAPGPV. Positions 851 to 865 are enriched in low complexity; that stretch reads AGPAGARGPAGPQGP. Residues 866–880 are compositionally biased toward basic and acidic residues; that stretch reads RGDKGETGEQGDRGI. K869 carries the 5-hydroxylysine modification. A 5-hydroxylysine; alternate modification is found at K881. O-linked (Gal...) hydroxylysine; alternate glycosylation is present at K881. A 4-hydroxyproline mark is found at P896, P899, P917, and P932. The segment covering 899 to 932 has biased composition (low complexity); it reads PGEQGPSGASGPAGPRGPPGSAGSPGKDGLNGLP. The residue at position 937 (P937) is a 3-hydroxyproline. A 4-hydroxyproline modification is found at P938. The segment covering 950 to 965 has biased composition (pro residues); the sequence is VGPPGPPGPPGPPGPP. P952 bears the 3-hydroxyproline mark. 4-hydroxyproline is present on P953. P955 is modified (3-hydroxyproline). The residue at position 956 (P956) is a 4-hydroxyproline. A 3-hydroxyproline modification is found at P958. A 4-hydroxyproline mark is found at P959, P962, and P965.

Belongs to the fibrillar collagen family. Trimers of one alpha 2(I) and two alpha 1(I) chains. Post-translationally, contains mostly 4-hydroxyproline. Proline residues at the third position of the tripeptide repeating unit (G-X-Y) are hydroxylated in some or all of the chains. Contains 3-hydroxyproline at a few sites. This modification occurs on the first proline residue in the sequence motif Gly-Pro-Hyp, where Hyp is 4-hydroxyproline. In terms of processing, lysine residues at the third position of the tripeptide repeating unit (G-X-Y) are 5-hydroxylated in some or all of the chains. Post-translationally, O-glycosylated on hydroxylated lysine residues. The O-linked glycan consists of a Glc-Gal disaccharide. In terms of tissue distribution, expressed in bones.

It localises to the secreted. The protein resides in the extracellular space. It is found in the extracellular matrix. Type I collagen is a member of group I collagen (fibrillar forming collagen). This chain is Collagen alpha-1(I) chain, found in Acratocnus sp. (strain SLP-2019) (Ground sloth).